The primary structure comprises 238 residues: Large ribosomal subunit protein uL1 (238 aa).

This sequence belongs to the universal ribosomal protein uL1 family. Part of the 50S ribosomal subunit.

Functionally, binds directly to 23S rRNA. The L1 stalk is quite mobile in the ribosome, and is involved in E site tRNA release. Protein L1 is also a translational repressor protein, it controls the translation of the L11 operon by binding to its mRNA. The protein is Large ribosomal subunit protein uL1 of Picosynechococcus sp. (strain ATCC 27264 / PCC 7002 / PR-6) (Agmenellum quadruplicatum).